Consider the following 282-residue polypeptide: uncharacterized protein (282 aa).

Residue Y50 is the Proton donor of the active site. H115 is a substrate binding site.

Belongs to the aldo/keto reductase family.

This is an uncharacterized protein from Saccharomyces cerevisiae (strain ATCC 204508 / S288c) (Baker's yeast).